The sequence spans 396 residues: Elongation factor Tu (396 aa).

The 197-residue stretch at 10 to 206 (KPHVNVGTIG…AVDAYIPTPQ (197 aa)) folds into the tr-type G domain. The segment at 19 to 26 (GHVDHGKT) is G1. 19-26 (GHVDHGKT) serves as a coordination point for GTP. Thr26 provides a ligand contact to Mg(2+). The G2 stretch occupies residues 60-64 (GITIA). The tract at residues 81–84 (DCPG) is G3. GTP contacts are provided by residues 81 to 85 (DCPGH) and 136 to 139 (NKVD). A G4 region spans residues 136 to 139 (NKVD). A G5 region spans residues 174-176 (SAL).

It belongs to the TRAFAC class translation factor GTPase superfamily. Classic translation factor GTPase family. EF-Tu/EF-1A subfamily. Monomer.

The protein localises to the cytoplasm. It carries out the reaction GTP + H2O = GDP + phosphate + H(+). Functionally, GTP hydrolase that promotes the GTP-dependent binding of aminoacyl-tRNA to the A-site of ribosomes during protein biosynthesis. The chain is Elongation factor Tu from Anaeromyxobacter dehalogenans (strain 2CP-C).